The following is a 217-amino-acid chain: Probable transaldolase (217 aa).

Lys-83 serves as the catalytic Schiff-base intermediate with substrate.

Belongs to the transaldolase family. Type 3B subfamily.

The protein resides in the cytoplasm. The enzyme catalyses D-sedoheptulose 7-phosphate + D-glyceraldehyde 3-phosphate = D-erythrose 4-phosphate + beta-D-fructose 6-phosphate. It functions in the pathway carbohydrate degradation; pentose phosphate pathway; D-glyceraldehyde 3-phosphate and beta-D-fructose 6-phosphate from D-ribose 5-phosphate and D-xylulose 5-phosphate (non-oxidative stage): step 2/3. In terms of biological role, transaldolase is important for the balance of metabolites in the pentose-phosphate pathway. The chain is Probable transaldolase from Maricaulis maris (strain MCS10) (Caulobacter maris).